Here is a 251-residue protein sequence, read N- to C-terminus: Prolactin-7B1 (251 aa).

Positions 1–29 (MNTSLTQLCFWALQILLMSNLLLWEDVVS) are cleaved as a signal peptide. 2 N-linked (GlcNAc...) asparagine glycosylation sites follow: asparagine 2 and asparagine 73. 2 disulfides stabilise this stretch: cysteine 100/cysteine 216 and cysteine 233/cysteine 241.

The protein belongs to the somatotropin/prolactin family. As to expression, expression restricted to placenta. Abundantly expressed in trophoblast cells of the junctional zone and trophoblasts migrating into the mesometrial decidua.

It localises to the secreted. In Mus musculus (Mouse), this protein is Prolactin-7B1 (Prl7b1).